The chain runs to 222 residues: S-crystallin SL20-1 (222 aa).

The region spanning 2 to 80 (PNYTLYYFNG…YLARENGYYG (79 aa)) is the GST N-terminal domain. The GST C-terminal domain occupies 82–222 (NNMDMFRIDY…YLKKRNNTNW (141 aa)).

The protein belongs to the GST superfamily. As to expression, lens.

Functionally, S-crystallins are structural components of squids and octopi eye lens. Contains relatively little if any GST activity. In Nototodarus sloanii (Wellington flying squid), this protein is S-crystallin SL20-1.